The chain runs to 155 residues: Transcriptional repressor NrdR (155 aa).

The segment at 3 to 34 (CPKCDHNGTRVLDSRPVQDHYSIRRRRECEKC) is a zinc-finger region. The 91-residue stretch at 49-139 (LIIVKKDGNR…VYRQFKDITV (91 aa)) folds into the ATP-cone domain.

It belongs to the NrdR family. Requires Zn(2+) as cofactor.

In terms of biological role, negatively regulates transcription of bacterial ribonucleotide reductase nrd genes and operons by binding to NrdR-boxes. The chain is Transcriptional repressor NrdR from Exiguobacterium sp. (strain ATCC BAA-1283 / AT1b).